Consider the following 595-residue polypeptide: Elongation factor 4 (595 aa).

The region spanning 2–183 (KNIRNFCIIA…AIIERISPPT (182 aa)) is the tr-type G domain. Residues 14–19 (DHGKST) and 130–133 (NKID) contribute to the GTP site.

This sequence belongs to the TRAFAC class translation factor GTPase superfamily. Classic translation factor GTPase family. LepA subfamily.

The protein localises to the cell inner membrane. The enzyme catalyses GTP + H2O = GDP + phosphate + H(+). Required for accurate and efficient protein synthesis under certain stress conditions. May act as a fidelity factor of the translation reaction, by catalyzing a one-codon backward translocation of tRNAs on improperly translocated ribosomes. Back-translocation proceeds from a post-translocation (POST) complex to a pre-translocation (PRE) complex, thus giving elongation factor G a second chance to translocate the tRNAs correctly. Binds to ribosomes in a GTP-dependent manner. This is Elongation factor 4 from Amoebophilus asiaticus (strain 5a2).